We begin with the raw amino-acid sequence, 542 residues long: Chaperonin GroEL 2 (542 aa).

ATP is bound by residues 30-33, Lys-51, 87-91, Gly-415, and Asp-496; these read TLGP and DGTTT. The interval 523–542 is disordered; it reads AEKPKKDGQPQMPPAPGMDF. A compositionally biased stretch (pro residues) spans 533-542; the sequence is QMPPAPGMDF.

It belongs to the chaperonin (HSP60) family. In terms of assembly, forms a cylinder of 14 subunits composed of two heptameric rings stacked back-to-back. Interacts with the co-chaperonin GroES.

The protein resides in the cytoplasm. It carries out the reaction ATP + H2O + a folded polypeptide = ADP + phosphate + an unfolded polypeptide.. Its function is as follows. Together with its co-chaperonin GroES, plays an essential role in assisting protein folding. The GroEL-GroES system forms a nano-cage that allows encapsulation of the non-native substrate proteins and provides a physical environment optimized to promote and accelerate protein folding. In Sinorhizobium medicae (strain WSM419) (Ensifer medicae), this protein is Chaperonin GroEL 2.